A 340-amino-acid polypeptide reads, in one-letter code: Ketol-acid reductoisomerase (NADP(+)) (340 aa).

Residues 1–183 form the KARI N-terminal Rossmann domain; the sequence is MAITVYYDKD…GGGRTGIIET (183 aa). NADP(+) contacts are provided by residues 26–29, arginine 49, serine 52, serine 54, and 84–87; these read FGSQ and DEIQ. Histidine 109 is an active-site residue. Glycine 135 contributes to the NADP(+) binding site. The KARI C-terminal knotted domain occupies 184 to 329; that stretch reads TFKAETETDL…RNLRAMMPWI (146 aa). Residues aspartate 192, glutamate 196, glutamate 228, and glutamate 232 each coordinate Mg(2+). Residue serine 253 coordinates substrate.

Belongs to the ketol-acid reductoisomerase family. Requires Mg(2+) as cofactor.

It catalyses the reaction (2R)-2,3-dihydroxy-3-methylbutanoate + NADP(+) = (2S)-2-acetolactate + NADPH + H(+). The enzyme catalyses (2R,3R)-2,3-dihydroxy-3-methylpentanoate + NADP(+) = (S)-2-ethyl-2-hydroxy-3-oxobutanoate + NADPH + H(+). Its pathway is amino-acid biosynthesis; L-isoleucine biosynthesis; L-isoleucine from 2-oxobutanoate: step 2/4. It participates in amino-acid biosynthesis; L-valine biosynthesis; L-valine from pyruvate: step 2/4. In terms of biological role, involved in the biosynthesis of branched-chain amino acids (BCAA). Catalyzes an alkyl-migration followed by a ketol-acid reduction of (S)-2-acetolactate (S2AL) to yield (R)-2,3-dihydroxy-isovalerate. In the isomerase reaction, S2AL is rearranged via a Mg-dependent methyl migration to produce 3-hydroxy-3-methyl-2-ketobutyrate (HMKB). In the reductase reaction, this 2-ketoacid undergoes a metal-dependent reduction by NADPH to yield (R)-2,3-dihydroxy-isovalerate. The protein is Ketol-acid reductoisomerase (NADP(+)) of Campylobacter jejuni (strain RM1221).